A 265-amino-acid polypeptide reads, in one-letter code: (-)-isopiperitenol/(-)-carveol dehydrogenase, mitochondrial (265 aa).

The N-terminal 30 residues, 1-30, are a transit peptide targeting the mitochondrion; the sequence is MASVKKLAGKVAIVTGGASGIGEVTARLFA. 13–38 contacts NAD(+); that stretch reads IVTGGASGIGEVTARLFAERGARAVV. Position 147 (Ser-147) interacts with substrate. Tyr-160 serves as the catalytic Proton acceptor.

The protein belongs to the short-chain dehydrogenases/reductases (SDR) family. Homodimer and homotetramer. Peltate glandular trichomes.

Its subcellular location is the mitochondrion. It catalyses the reaction (1S,6R)-isopiperitenol + NAD(+) = (6R)-isopiperitenone + NADH + H(+). The catalysed reaction is (1S,5R)-carveol + NADP(+) = (R)-carvone + NADPH + H(+). Functionally, involved in the biosynthesis of menthol and related monoterpenes in leaves. Can use (-)-trans-carveol and, with a lower relative velocity, (-)-trans-isopiperitenol, (+)-neomenthol, (+)-neoisomenthol and (-)-cis-isopiperitenol as substrates, but not (-)-cis-carvenol, (-)-menthol, (+)-isomenthol, 7-hydroxy-limonene, (-)-isopiperitenone or (-)-carvone. In Mentha piperita (Peppermint), this protein is (-)-isopiperitenol/(-)-carveol dehydrogenase, mitochondrial.